The chain runs to 381 residues: Opsin-1 (381 aa).

Residues 1-53 (MASASLISEPSFSAYWGGSGGFANQTVVDKVPPEMLYLVDPHWYQFPPMNPLW) lie on the Extracellular side of the membrane. N-linked (GlcNAc...) asparagine glycosylation is present at asparagine 24. The helical transmembrane segment at 54–78 (HGLLGFVIGVLGVISVIGNGMVIYI) threads the bilayer. At 79–90 (FSTTKSLRTPSN) the chain is on the cytoplasmic side. A helical membrane pass occupies residues 91–115 (LLVVNLAFSDFLMMFTMSAPMGINC). Topologically, residues 116–130 (YYETWVLGPFMCELY) are extracellular. A disulfide bond links cysteine 127 and cysteine 204. The chain crosses the membrane as a helical span at residues 131-150 (ALFGSLFGCGSIWTMTMIAL). The Cytoplasmic segment spans residues 151-169 (DRYNVIVKGLSAKPMTNKT). Residues 170-193 (AMLRILFIWAFSVAWTIMPLFGWN) form a helical membrane-spanning segment. At 194 to 217 (RYVPEGNMTACGTDYLTKDWVSRS) the chain is on the extracellular side. An N-linked (GlcNAc...) asparagine glycan is attached at asparagine 200. The helical transmembrane segment at 218 to 245 (YILVYSFFVYLLPLGTIIYSYFFILQAV) threads the bilayer. Residues 246-280 (SAHEKQMREQRKKMNVASLRSAEASQTSAECKLAK) lie on the Cytoplasmic side of the membrane. The helical transmembrane segment at 281–304 (VALMTISLWFFGWTPYLIINFTGI) threads the bilayer. Residues 305–311 (FETMKIS) are Extracellular-facing. A helical membrane pass occupies residues 312–336 (PLLTIWGSLFAKANAVFNPIVYGIS). Residue lysine 323 is modified to N6-(retinylidene)lysine. Over 337 to 381 (HPKYRAALEKKFPSLACASSSDDNTSVASGATTVSDEKSEKSASA) the chain is Cytoplasmic. A compositionally biased stretch (polar residues) spans 354 to 370 (ASSSDDNTSVASGATTV). Residues 354–381 (ASSSDDNTSVASGATTVSDEKSEKSASA) form a disordered region. Residues 371-381 (SDEKSEKSASA) show a composition bias toward basic and acidic residues.

The protein belongs to the G-protein coupled receptor 1 family. Opsin subfamily. Post-translationally, phosphorylated on some or all of the serine and threonine residues present in the C-terminal region.

The protein resides in the cell projection. It is found in the rhabdomere membrane. Its function is as follows. Visual pigments are the light-absorbing molecules that mediate vision. They consist of an apoprotein, opsin, covalently linked to cis-retinal. The protein is Opsin-1 (Lo1) of Schistocerca gregaria (Desert locust).